A 311-amino-acid polypeptide reads, in one-letter code: Endosome-associated-trafficking regulator 1 (311 aa).

Residues 167-278 adopt a coiled-coil conformation; it reads RGNAENGTKN…KSENERLRLG (112 aa).

Belongs to the ENTR1 family.

The protein localises to the cytoplasm. It localises to the early endosome. The protein resides in the endosome. It is found in the recycling endosome. Its subcellular location is the midbody. The protein localises to the cytoskeleton. It localises to the microtubule organizing center. The protein resides in the centrosome. It is found in the cilium basal body. In terms of biological role, endosome-associated protein that plays a role in membrane receptor sorting, cytokinesis and ciliogenesis. The chain is Endosome-associated-trafficking regulator 1 from Danio rerio (Zebrafish).